We begin with the raw amino-acid sequence, 269 residues long: 4-hydroxy-4-methyl-2-oxoglutarate aldolase cghB (269 aa).

Residue histidine 48 is the Proton acceptor of the active site. A divalent metal cation contacts are provided by glutamate 155 and aspartate 181. Aspartate 181 lines the substrate pocket.

Belongs to the HpcH/HpaI aldolase family. Homohexamer; trimer of dimers. Co(2+) serves as cofactor. Requires Mn(2+) as cofactor. It depends on Zn(2+) as a cofactor. The cofactor is Fe(2+). Mg(2+) is required as a cofactor.

The enzyme catalyses 4-hydroxy-4-methyl-2-oxoglutarate = 2 pyruvate. It functions in the pathway secondary metabolite biosynthesis. 4-hydroxy-4-methyl-2-oxoglutarate aldolase; part of the gene cluster that mediates the biosynthesis of the tetramic acid Sch210972, a potential anti-HIV fungal natural product that contains a decalin core. The PKS module of cghG together with the enoylreductase cghC catalyze the formation of the polyketide unit which is then conjugated to 4-hydroxyl-4-methyl glutamate (HMG) by the condensation domain of the cghG NRPS module. One unique structural feature of Sch210972 is the tetramic acid motif proposed to be derived from the non-proteinogenic amino acid HMG, by a Dieckmann-type condensation catalyzed by the reductase domain of cghG. The aldolase cghB catalyzes the aldol condensation of 2 molecules of pyruvic acid to yield the intermediate 4-hydroxyl-4-methyl-2-oxoglutarate (HMOG), which can then be stereoselectively transaminated by an unidentified enzyme to form HMG. The Diels-Alderase cghA then uses the Dieckmann product released by cghG as substrate and catalyzes the Diels-Alder cycloaddition to form the decalin ring of Sch210972. CghA also suppresses the nonenzymatic formation of the alternative stereoisomer. The protein is 4-hydroxy-4-methyl-2-oxoglutarate aldolase cghB of Chaetomium globosum (strain ATCC 6205 / CBS 148.51 / DSM 1962 / NBRC 6347 / NRRL 1970) (Soil fungus).